Here is a 132-residue protein sequence, read N- to C-terminus: Small ribosomal subunit protein uS8 (132 aa).

It belongs to the universal ribosomal protein uS8 family. In terms of assembly, part of the 30S ribosomal subunit. Contacts proteins S5 and S12.

In terms of biological role, one of the primary rRNA binding proteins, it binds directly to 16S rRNA central domain where it helps coordinate assembly of the platform of the 30S subunit. The polypeptide is Small ribosomal subunit protein uS8 (Corynebacterium diphtheriae (strain ATCC 700971 / NCTC 13129 / Biotype gravis)).